Here is a 266-residue protein sequence, read N- to C-terminus: Methionine aminopeptidase (266 aa).

Residue His80 coordinates substrate. A divalent metal cation-binding residues include Asp98, Asp109, and His172. His179 is a binding site for substrate. The a divalent metal cation site is built by Glu206 and Glu237.

This sequence belongs to the peptidase M24A family. Methionine aminopeptidase type 1 subfamily. As to quaternary structure, monomer. It depends on Co(2+) as a cofactor. Requires Zn(2+) as cofactor. Mn(2+) is required as a cofactor. The cofactor is Fe(2+).

The enzyme catalyses Release of N-terminal amino acids, preferentially methionine, from peptides and arylamides.. Its function is as follows. Removes the N-terminal methionine from nascent proteins. The N-terminal methionine is often cleaved when the second residue in the primary sequence is small and uncharged (Met-Ala-, Cys, Gly, Pro, Ser, Thr, or Val). Requires deformylation of the N(alpha)-formylated initiator methionine before it can be hydrolyzed. The sequence is that of Methionine aminopeptidase from Buchnera aphidicola subsp. Baizongia pistaciae (strain Bp).